A 145-amino-acid polypeptide reads, in one-letter code: MMDSVQIRKYLPHRYPFLLIDRVVELVEGDYILAYKNITINEEVFQGHFPNYPVFPGVMLIEAMAQACGVLGFKTMDKTPDDGSIYLFAGIDNVRFKRQVIPGDRVFFNCKKISDKRGIWKFECVATVDDQLVTSATIMCADRSI.

Histidine 48 is an active-site residue.

The protein belongs to the thioester dehydratase family. FabZ subfamily.

The protein resides in the cytoplasm. The enzyme catalyses a (3R)-hydroxyacyl-[ACP] = a (2E)-enoyl-[ACP] + H2O. Functionally, involved in unsaturated fatty acids biosynthesis. Catalyzes the dehydration of short chain beta-hydroxyacyl-ACPs and long chain saturated and unsaturated beta-hydroxyacyl-ACPs. The sequence is that of 3-hydroxyacyl-[acyl-carrier-protein] dehydratase FabZ from Saccharophagus degradans (strain 2-40 / ATCC 43961 / DSM 17024).